The sequence spans 490 residues: MRTNPLVLGVSALVEKNVGYIAQIIGPVLDVSFSPGYMPNIYNSLKVQGQGTAGQEIQVTCEVQQLLGNHKVRAVAMSATDGLTRGMTVIDTGAPLSVPVGGATLGRIFNVLGEPVDNLGPVDARITSPIHRTAPAFTELDTKLSIFETGIKVVDLLAPYRRGGKIGLFGGAGVGKTVLIMELINNIAKAHGGVSVFGGVGERTREGNDLYMEMKESGVIDEQKISESKVALVYGQMNEPPGARMRVGLTALTMAEYFRDVNEQDVLLFIDNIFRFVQAGSEVSALLGRMPSAVGYQPTLSTEMGSLQERITSTKKGSITSIQAVYVPADDLTDPAPATTFAHLDATTVLSRGLAAKGIYPAVDPLDSTSTMLQPWIVGEEHYETAQGVKQTLQRYKELQDIIAIPGLDELSEEDRLIVARARKIERFLSQPFFVAEVFTGSPGKYVGLMETIRGFQMILSGELDGLTEQSFYLVGNIDEATVRLNSTGK.

Residue 170–177 participates in ATP binding; sequence GGAGVGKT.

It belongs to the ATPase alpha/beta chains family. F-type ATPases have 2 components, CF(1) - the catalytic core - and CF(0) - the membrane proton channel. CF(1) has five subunits: alpha(3), beta(3), gamma(1), delta(1), epsilon(1). CF(0) has four main subunits: a(1), b(1), b'(1) and c(9-12).

Its subcellular location is the plastid. The protein localises to the chloroplast thylakoid membrane. The catalysed reaction is ATP + H2O + 4 H(+)(in) = ADP + phosphate + 5 H(+)(out). Functionally, produces ATP from ADP in the presence of a proton gradient across the membrane. The catalytic sites are hosted primarily by the beta subunits. The chain is ATP synthase subunit beta, chloroplastic from Pinus koraiensis (Korean pine).